The chain runs to 152 residues: Protein SprT-like (152 aa).

The 142-residue stretch at 7–148 (QRLVEEVSLQ…GKCKGKLILI (142 aa)) folds into the SprT-like domain. H67 provides a ligand contact to Zn(2+). Residue E68 is part of the active site. Zn(2+) is bound at residue H71.

It belongs to the SprT family. It depends on Zn(2+) as a cofactor.

It is found in the cytoplasm. The protein is Protein SprT-like of Bacillus cereus (strain ATCC 10987 / NRS 248).